Consider the following 140-residue polypeptide: uncharacterized protein (140 aa).

Residues 1-19 (MGLCGSKTQPMPSQTTTVA) show a composition bias toward polar residues. The interval 1–140 (MGLCGSKTQP…ERERENMIYD (140 aa)) is disordered. Residue Gly2 is the site of N-myristoyl glycine attachment. A lipid anchor (S-palmitoyl cysteine) is attached at Cys4. The segment covering 27–40 (INRDTVKSKQELRH) has biased composition (basic and acidic residues). A compositionally biased stretch (basic residues) spans 41 to 51 (KEKKDKKKKTQ). The span at 73-140 (DPSKNKVSPK…ERERENMIYD (68 aa)) shows a compositional bias: basic and acidic residues.

It to S.pombe new13. In terms of processing, myristoylated. The N-myristoylated protein is further palmitoylated by ERF2, PFA4 and slightly by PFA5, but not by PFA3.

The protein resides in the cytoplasm. It is found in the cytosol. This is an uncharacterized protein from Saccharomyces cerevisiae (strain ATCC 204508 / S288c) (Baker's yeast).